Consider the following 242-residue polypeptide: Endoplasmic reticulum membrane protein complex subunit 7 (242 aa).

Residues 1–23 (MAAALWGFFPVLLLLLLSGDVQS) form the signal peptide. The Lumenal segment spans residues 24-159 (SEVPGAAAEG…IKRESWGWTD (136 aa)). Residues 160 to 180 (FLMNPMVMMMVLPLLIFVLLP) traverse the membrane as a helical segment. Over 181 to 242 (KVVNTSDPDM…TGKSGAGKRR (62 aa)) the chain is Cytoplasmic. The segment at 217–242 (LFSSKSSGKSSSGSSKTGKSGAGKRR) is disordered. The span at 219–235 (SSKSSGKSSSGSSKTGK) shows a compositional bias: low complexity.

It belongs to the EMC7 family. As to quaternary structure, component of the ER membrane protein complex (EMC).

The protein resides in the endoplasmic reticulum membrane. Functionally, part of the endoplasmic reticulum membrane protein complex (EMC) that enables the energy-independent insertion into endoplasmic reticulum membranes of newly synthesized membrane proteins. Preferentially accommodates proteins with transmembrane domains that are weakly hydrophobic or contain destabilizing features such as charged and aromatic residues. Involved in the cotranslational insertion of multi-pass membrane proteins in which stop-transfer membrane-anchor sequences become ER membrane spanning helices. It is also required for the post-translational insertion of tail-anchored/TA proteins in endoplasmic reticulum membranes. By mediating the proper cotranslational insertion of N-terminal transmembrane domains in an N-exo topology, with translocated N-terminus in the lumen of the ER, controls the topology of multi-pass membrane proteins like the G protein-coupled receptors. By regulating the insertion of various proteins in membranes, it is indirectly involved in many cellular processes. This Homo sapiens (Human) protein is Endoplasmic reticulum membrane protein complex subunit 7 (EMC7).